The sequence spans 84 residues: uncharacterized protein (84 aa).

This is an uncharacterized protein from Saccharomyces cerevisiae (strain ATCC 204508 / S288c) (Baker's yeast).